The sequence spans 333 residues: Ribosomal RNA small subunit methyltransferase C (333 aa).

Belongs to the methyltransferase superfamily. RsmC family. Monomer.

It is found in the cytoplasm. The catalysed reaction is guanosine(1207) in 16S rRNA + S-adenosyl-L-methionine = N(2)-methylguanosine(1207) in 16S rRNA + S-adenosyl-L-homocysteine + H(+). Specifically methylates the guanine in position 1207 of 16S rRNA in the 30S particle. In Actinobacillus succinogenes (strain ATCC 55618 / DSM 22257 / CCUG 43843 / 130Z), this protein is Ribosomal RNA small subunit methyltransferase C.